A 432-amino-acid polypeptide reads, in one-letter code: Glutamate-1-semialdehyde 2,1-aminomutase 1 (432 aa).

K268 bears the N6-(pyridoxal phosphate)lysine mark.

This sequence belongs to the class-III pyridoxal-phosphate-dependent aminotransferase family. HemL subfamily. In terms of assembly, homodimer. Pyridoxal 5'-phosphate serves as cofactor.

The protein resides in the cytoplasm. It carries out the reaction (S)-4-amino-5-oxopentanoate = 5-aminolevulinate. The protein operates within porphyrin-containing compound metabolism; protoporphyrin-IX biosynthesis; 5-aminolevulinate from L-glutamyl-tRNA(Glu): step 2/2. This is Glutamate-1-semialdehyde 2,1-aminomutase 1 from Bacillus cereus (strain ZK / E33L).